The chain runs to 495 residues: Ribosomal protein uS12 methylthiotransferase RimO (495 aa).

In terms of domain architecture, MTTase N-terminal spans 5–121 (RTVALVTLGC…ISDRLQTILN (117 aa)). [4Fe-4S] cluster-binding residues include cysteine 14, cysteine 50, and cysteine 84. The tract at residues 145-183 (QSAGADVALPGHGAPEGLPEDLPEGLAPESGPRAPLRRR) is disordered. In terms of domain architecture, Radical SAM core spans 184 to 415 (LDGSPVASVK…RLAEELVAQR (232 aa)). Cysteine 198, cysteine 202, and cysteine 205 together coordinate [4Fe-4S] cluster. The TRAM domain maps to 417 to 484 (EERVGETVHV…GVDLVAEPLP (68 aa)).

It belongs to the methylthiotransferase family. RimO subfamily. [4Fe-4S] cluster is required as a cofactor.

The protein localises to the cytoplasm. The enzyme catalyses L-aspartate(89)-[ribosomal protein uS12]-hydrogen + (sulfur carrier)-SH + AH2 + 2 S-adenosyl-L-methionine = 3-methylsulfanyl-L-aspartate(89)-[ribosomal protein uS12]-hydrogen + (sulfur carrier)-H + 5'-deoxyadenosine + L-methionine + A + S-adenosyl-L-homocysteine + 2 H(+). Its function is as follows. Catalyzes the methylthiolation of an aspartic acid residue of ribosomal protein uS12. In Streptomyces avermitilis (strain ATCC 31267 / DSM 46492 / JCM 5070 / NBRC 14893 / NCIMB 12804 / NRRL 8165 / MA-4680), this protein is Ribosomal protein uS12 methylthiotransferase RimO.